The following is a 654-amino-acid chain: MKLSLVAAVLLLLCAARAEEEDKKEDVGTVVGIDLGTTYSCVGVFKNGRVEIIANDQGNRITPSYVAFTPEGERLIGDAAKNQLTSNPENTVFDAKRLIGRTWNDPSVQQDIKFLPFKVVEKKTKPYIQVDIGGGQTKTFAPEEISAMVLTKMKETAEAYLGKKVTHAVVTVPAYFNDAQRQATKDAGTIAGLNVMRIINEPTAAAIAYGLDKREGEKNILVFDLGGGTFDVSLLTIDNGVFEVVATNGDTHLGGEDFDQRVMEHFIKLYKKKTGKDVRKDNRAVQKLRREVEKAKRALSSQHQARIEIESFYEGEDFSETLTRAKFEELNMDLFRSTMKPVQKVLEDSDLKKSDIDEIVLVGGSTRIPKIQQLVKEFFNGKEPSRGINPDEAVAYGAAVQAGVLSGDQDTGDLVLLDVCPLTLGIETVGGVMTKLIPRNTVVPTKKSQISSTASDNQPTVTIKVYEGERPLTKDNHLLGTFDLTGIPPAPRGVPQIEVTFEIDVNGILRVTAEDKGTGNKNKITITNDQNRLTPEEIERMVNDAEKFAEEDKRLKERIDTRNELESYAYSLKNQIGDKEKLGGKLSSEDKETMEKAVEEKIEWLESHQDADIEDFKAKKKELEEIVQPIISKLYGSAGPPPTGEEDTSERDEL.

The first 18 residues, 1–18 (MKLSLVAAVLLLLCAARA), serve as a signal peptide directing secretion. Positions 1 to 80 (MKLSLVAAVL…EGERLIGDAA (80 aa)) are required for interaction with ELAPOR1. Residue 36–39 (GTTY) coordinates ATP. The residue at position 86 (Ser-86) is a Phosphoserine. Lys-96 serves as a coordination point for ATP. Residue Lys-125 is modified to N6-acetyllysine. The segment at 125–280 (KPYIQVDIGG…KKKTGKDVRK (156 aa)) is nucleotide-binding (NBD). Tyr-160 carries the post-translational modification 3'-nitrotyrosine. Lys-213 is subject to N6-acetyllysine. 227 to 229 (GGT) is an ATP binding site. Lys-271 is subject to N6-acetyllysine. 293–300 (EKAKRALS) is an ATP binding site. Lys-326 is modified (N6-acetyllysine). Residue Lys-352 forms a Glycyl lysine isopeptide (Lys-Gly) (interchain with G-Cter in SUMO2) linkage. N6-acetyllysine; alternate is present on Lys-353. Lys-353 participates in a covalent cross-link: Glycyl lysine isopeptide (Lys-Gly) (interchain with G-Cter in SUMO1); alternate. ATP is bound at residue 364–367 (GSTR). The interdomain linker stretch occupies residues 409 to 419 (QDTGDLVLLDV). Positions 420 to 500 (CPLTLGIETV…PRGVPQIEVT (81 aa)) are substrate-binding (SBD). Lys-447 is subject to N6-succinyllysine. Position 492 is an omega-N-methylarginine (Arg-492). Thr-518 carries the O-AMP-threonine; alternate modification. Residue Thr-518 is modified to Phosphothreonine; alternate. Position 585 is an N6,N6,N6-trimethyllysine; by METTL21A; in vitro (Lys-585). Lys-585 carries the post-translational modification N6,N6-dimethyllysine; alternate. Residue Lys-585 is modified to N6-methyllysine; alternate. At Lys-591 the chain carries N6-methyllysine. A disordered region spans residues 632–654 (SKLYGSAGPPPTGEEDTSERDEL). 2 positions are modified to phosphothreonine: Thr-643 and Thr-648. Acidic residues predominate over residues 644-654 (GEEDTSERDEL). The residue at position 649 (Ser-649) is a Phosphoserine. Residues 651-654 (RDEL) carry the Prevents secretion from ER motif.

It belongs to the heat shock protein 70 family. Monomer and homooligomer; homooligomerization via the interdomain linker inactivates the chaperone activity and acts as a storage of HSPA5/BiP molecules. Interacts with DNAJC1 (via J domain). Component of an EIF2 complex at least composed of CELF1/CUGBP1, CALR, CALR3, EIF2S1, EIF2S2, HSP90B1 and HSPA5. Part of a large chaperone multiprotein complex comprising DNAJB11, HSP90B1, HSPA5, HYOU, PDIA2, PDIA4, PDIA6, PPIB, SDF2L1, UGGT1 and very small amounts of ERP29, but not, or at very low levels, CALR nor CANX. Interacts with TMEM132A and TRIM21. May form a complex with ERLEC1, OS9, SEL1L and SYVN1. Interacts with DNAJC10. Interacts with DNAJB9/ERdj4; leading to recruit HSPA5/BiP to ERN1/IRE1. Interacts with ERN1/IRE1 (via luminal domain); the interaction takes place following interaction with DNAJB9/ERdj4 and leads to inactivate ERN1/IRE1, the interaction also competitively inhibits ERN1 interaction with MANF. Interacts directly with MANF (via SAP domain); the interaction inhibits ATP binding to HSPA5/BiP and subsequent nucleotide exchange. Interacts with EIF2AK3/PERK (via luminal domain); interaction leads to inactivate EIF2AK3/PERK. Interacts with MX1. Interacts with METTL23. Interacts with CEMIP; the interaction induces calcium leakage from the endoplasmic reticulum and cell migration. Interacts with PCSK4 form; the interaction takes place in the endoplasmic reticulum. Interacts with CIPC. Interacts with CCDC88B (via C-terminus); the interaction opposes ERN1-mediated JNK activation, protecting against apoptosis. Interacts with INPP5K; necessary for INPP5K localization at the endoplasmic reticulum. Interacts with MANF; the interaction is direct. Interacts with LOXL2; leading to activate the ERN1/IRE1-XBP1 pathway of the unfolded protein response. Interacts with CLU under stressed condition; interaction increases CLU protein stability; facilitates its retrotranslocation and redistribution to the mitochondria; cooperatively suppress stress-induced apoptosis by stabilizing mitochondrial membrane integrity. Interacts with CCDC47. Interacts with CLN3. Interacts with ELAPOR1; may regulate the function of HSPA5 in apoptosis and cell proliferation. Interacts with CASP7. Interacts with ILDR2; the interaction stabilizes ILDR2 expression. Interacts with ADAM7. In terms of processing, in unstressed cells, AMPylation at Thr-518 by FICD inactivates the chaperome activity: AMPylated form is locked in a relatively inert state and only weakly stimulated by J domain-containing proteins. In response to endoplasmic reticulum stress, de-AMPylation by the same protein, FICD, restores the chaperone activity.

The protein resides in the endoplasmic reticulum lumen. It is found in the melanosome. It localises to the cytoplasm. The protein localises to the cell surface. It catalyses the reaction ATP + H2O = ADP + phosphate + H(+). Its activity is regulated as follows. The chaperone activity is regulated by ATP-induced allosteric coupling of the nucleotide-binding (NBD) and substrate-binding (SBD) domains. In the ADP-bound and nucleotide-free (apo) states, the two domains have little interaction. In contrast, in the ATP-bound state the two domains are tightly coupled, which results in drastically accelerated kinetics in both binding and release of polypeptide substrates. J domain-containing co-chaperones (DNAJB9/ERdj4 or DNAJC10/ERdj5) stimulate the ATPase activity and are required for efficient substrate recognition by HSPA5/BiP. Homooligomerization inactivates participating HSPA5/BiP protomers and probably act as reservoirs to store HSPA5/BiP molecules when they are not needed by the cell. Its function is as follows. Endoplasmic reticulum chaperone that plays a key role in protein folding and quality control in the endoplasmic reticulum lumen. Involved in the correct folding of proteins and degradation of misfolded proteins via its interaction with DNAJC10/ERdj5, probably to facilitate the release of DNAJC10/ERdj5 from its substrate. Acts as a key repressor of the EIF2AK3/PERK and ERN1/IRE1-mediated unfolded protein response (UPR). In the unstressed endoplasmic reticulum, recruited by DNAJB9/ERdj4 to the luminal region of ERN1/IRE1, leading to disrupt the dimerization of ERN1/IRE1, thereby inactivating ERN1/IRE1. Also binds and inactivates EIF2AK3/PERK in unstressed cells. Accumulation of misfolded protein in the endoplasmic reticulum causes release of HSPA5/BiP from ERN1/IRE1 and EIF2AK3/PERK, allowing their homodimerization and subsequent activation. Plays an auxiliary role in post-translational transport of small presecretory proteins across endoplasmic reticulum (ER). May function as an allosteric modulator for SEC61 channel-forming translocon complex, likely cooperating with SEC62 to enable the productive insertion of these precursors into SEC61 channel. Appears to specifically regulate translocation of precursors having inhibitory residues in their mature region that weaken channel gating. May also play a role in apoptosis and cell proliferation. The polypeptide is Endoplasmic reticulum chaperone BiP (Ictidomys tridecemlineatus (Thirteen-lined ground squirrel)).